A 134-amino-acid chain; its full sequence is Profilin (134 aa).

The protein belongs to the profilin family. As to quaternary structure, occurs in many kinds of cells as a complex with monomeric actin in a 1:1 ratio.

It localises to the cytoplasm. It is found in the cytoskeleton. Its function is as follows. Binds to actin and affects the structure of the cytoskeleton. At high concentrations, profilin prevents the polymerization of actin, whereas it enhances it at low concentrations. By binding to PIP2, it inhibits the formation of IP3 and DG. The polypeptide is Profilin (Apium graveolens (Celery)).